A 67-amino-acid polypeptide reads, in one-letter code: Guanine nucleotide-binding protein G(I)/G(S)/G(O) subunit gamma-13 (67 aa).

Cys64 is modified (cysteine methyl ester). Cys64 is lipidated: S-farnesyl cysteine. The propeptide at 65–67 (TIL) is removed in mature form.

It belongs to the G protein gamma family. G proteins are composed of 3 units, alpha, beta and gamma.

It localises to the cell membrane. Guanine nucleotide-binding proteins (G proteins) are involved as a modulator or transducer in various transmembrane signaling systems. The beta and gamma chains are required for the GTPase activity, for replacement of GDP by GTP, and for G protein-effector interaction. The chain is Guanine nucleotide-binding protein G(I)/G(S)/G(O) subunit gamma-13 (Gng13) from Mus musculus (Mouse).